A 155-amino-acid chain; its full sequence is DNA-directed RNA polymerase II subunit rpb4 (155 aa).

The protein belongs to the eukaryotic RPB4 RNA polymerase subunit family. As to quaternary structure, component of the RNA polymerase II (Pol II) complex consisting of 12 subunits. RPB4 and RPB7 form a subcomplex that protrudes from the 10-subunit Pol II core complex.

It localises to the nucleus. In terms of biological role, DNA-dependent RNA polymerase catalyzes the transcription of DNA into RNA using the four ribonucleoside triphosphates as substrates. Component of RNA polymerase II which synthesizes mRNA precursors and many functional non-coding RNAs. Pol II is the central component of the basal RNA polymerase II transcription machinery. It is composed of mobile elements that move relative to each other. RPB4 is part of a subcomplex with RPB7 that binds to a pocket formed by RPB1, RPB2 and RPB6 at the base of the clamp element. The RPB4-RPB7 subcomplex seems to lock the clamp via RPB7 in the closed conformation thus preventing double-stranded DNA to enter the active site cleft. The RPB4-RPB7 subcomplex binds single-stranded DNA and RNA. The chain is DNA-directed RNA polymerase II subunit rpb4 (polr2d) from Dictyostelium discoideum (Social amoeba).